The sequence spans 72 residues: Small ribosomal subunit protein bS20 (72 aa).

Belongs to the bacterial ribosomal protein bS20 family.

Binds directly to 16S ribosomal RNA. This Aeromonas salmonicida protein is Small ribosomal subunit protein bS20 (rpsT).